The following is a 420-amino-acid chain: ATP phosphoribosyltransferase regulatory subunit (420 aa).

It belongs to the class-II aminoacyl-tRNA synthetase family. HisZ subfamily. As to quaternary structure, heteromultimer composed of HisG and HisZ subunits.

The protein localises to the cytoplasm. It functions in the pathway amino-acid biosynthesis; L-histidine biosynthesis; L-histidine from 5-phospho-alpha-D-ribose 1-diphosphate: step 1/9. Its function is as follows. Required for the first step of histidine biosynthesis. May allow the feedback regulation of ATP phosphoribosyltransferase activity by histidine. The protein is ATP phosphoribosyltransferase regulatory subunit of Bacillus cereus (strain B4264).